The sequence spans 519 residues: Putative cysteine ligase BshC (519 aa).

Coiled coils occupy residues 51 to 71 (LNAL…SLKE) and 440 to 464 (TKLN…HEQA).

The protein belongs to the BshC family.

In terms of biological role, involved in bacillithiol (BSH) biosynthesis. May catalyze the last step of the pathway, the addition of cysteine to glucosamine malate (GlcN-Mal) to generate BSH. This is Putative cysteine ligase BshC from Exiguobacterium sibiricum (strain DSM 17290 / CCUG 55495 / CIP 109462 / JCM 13490 / 255-15).